Here is a 329-residue protein sequence, read N- to C-terminus: Phosphatidylcholine:ceramide cholinephosphotransferase 3 (329 aa).

Over 1 to 26 (MAVPPVEMYSGSFWNRMRKPLPLRTQ) the chain is Cytoplasmic. The helical transmembrane segment at 27–47 (VIRFTVVFVIVSFILAVALQI) threads the bilayer. Over 48-74 (THERMPDPKVTKPLPDLGFELLTKVPG) the chain is Extracellular. A helical transmembrane segment spans residues 75-95 (MYVLADCCIGFLNILSVFTAF). Topologically, residues 96–147 (KLYLLHRHCVGSGEPELPCNIPGVSRFFLSVWLCKENCRIELRNIHTIAWIR) are cytoplasmic. The chain crosses the membrane as a helical span at residues 148–168 (FITSYALLLLFRSAVIVMTSL). Over 169–211 (PAPDDLCQNPPKIENPVKNVILTVLTAGAGSIHCGDLMYSGHT) the chain is Extracellular. A helical transmembrane segment spans residues 212–232 (VILTLHLMFHWIYGAMVHWSF). A topological domain (cytoplasmic) is located at residue Arg233. A helical transmembrane segment spans residues 234 to 254 (PVVTVVAIFGYYCIVASRFHY). At 255-257 (TDD) the chain is on the extracellular side. A helical membrane pass occupies residues 258 to 278 (VLVAIYLTIATFIAVGHNADG). Topologically, residues 279–329 (APWQLQLFIRWWPCCGANSREVTEDSQPVMVAFKSEAAGQSSRKVVDERNH) are cytoplasmic.

This sequence belongs to the sphingomyelin synthase family.

It is found in the membrane. It catalyses the reaction an N-acylsphing-4-enine + a 1,2-diacyl-sn-glycero-3-phosphocholine = a sphingomyelin + a 1,2-diacyl-sn-glycerol. It carries out the reaction an N-acylsphinganine + a 1,2-diacyl-sn-glycero-3-phosphocholine = an N-acylsphinganine-1-phosphocholine + a 1,2-diacyl-sn-glycerol. The catalysed reaction is an N-acylsphing-4-enine + a 1,2-diacyl-sn-glycero-3-phosphoethanolamine = an N-acylsphing-4-enine 1-phosphoethanolamine + a 1,2-diacyl-sn-glycerol. The enzyme catalyses an N-acylsphinganine + a 1,2-diacyl-sn-glycero-3-phosphoethanolamine = an N-acylsphinganine-1-phosphoethanolamine + a 1,2-diacyl-sn-glycerol. Functionally, bifunctional sphingomyelin (SM)/ethanolamine phosphorylceramide (EPC) synthase with minimal inositol phosphorylceramide (IPC) synthase activity. Specificity is likely to be defined by residues in the lumenal catalytic domain that interact with the polar head groups of the phospholipid donors. SM is synthesized by both stages of the parasite life cycle, bloodstream forms (BSF) and procyclic forms (PCF), by transferring the phosphocholine from a 1,2-diacyl-sn-glycero-3-phosphocholine to an N-acylsphing-4-enine (ceramide) or an N-acylsphinganine (dihydroceramide). Similarly, EPC is synthesized by transferring phosphoethanolamine from a 1,2-diacyl-sn-glycero-3-phosphoethanolamine to ceramide or dihydroceramide by BSF and PCF, while IPC is confined to PCF. The ceramide/dihydroceramide ratios are skewed towards dihydroceramide in PCF parasites and ceramide in BSF parasites, this is likely due to differential expression and/or regulation of dihydroceramide desaturase, the enzyme responsible for converting dihydroceramide to ceramide. This is Phosphatidylcholine:ceramide cholinephosphotransferase 3 from Trypanosoma brucei brucei.